The primary structure comprises 311 residues: Glycine--tRNA ligase alpha subunit (311 aa).

This sequence belongs to the class-II aminoacyl-tRNA synthetase family. In terms of assembly, tetramer of two alpha and two beta subunits.

It is found in the cytoplasm. It catalyses the reaction tRNA(Gly) + glycine + ATP = glycyl-tRNA(Gly) + AMP + diphosphate. This is Glycine--tRNA ligase alpha subunit from Bradyrhizobium diazoefficiens (strain JCM 10833 / BCRC 13528 / IAM 13628 / NBRC 14792 / USDA 110).